The chain runs to 1472 residues: Gag-Pol polyprotein (1472 aa).

Gly-2 is lipidated: N-myristoyl glycine; by host. A Nuclear export signal motif is present at residues 16 to 22 (FEKIRLR). The Nuclear localization signal motif lies at 26–32 (KKKYQIK). Disordered regions lie at residues 115-135 (EKAA…SRNY) and 215-234 (DRTH…RDPT). A Phosphotyrosine; by host modification is found at Tyr-135. 2 consecutive CCHC-type zinc fingers follow at residues 390–407 (LKCF…ECKA) and 411–428 (IKCF…DCKN). The segment at 454–500 (HSWSGTNSPPNGNSLRSSKEAPPAVCREGTAPERGERTDKETEGERS) is disordered. Over residues 456-469 (WSGTNSPPNGNSLR) the composition is skewed to polar residues. Positions 483-499 (TAPERGERTDKETEGER) are enriched in basic and acidic residues. The 74-residue stretch at 524–597 (VQALLDTGAD…TPINIIGRNI (74 aa)) folds into the Peptidase A2 domain. Catalysis depends on Asp-529, which acts as the For protease activity; shared with dimeric partner. The 191-residue stretch at 653–843 (EGKLSRIGGE…PPWEWMGYKL (191 aa)) folds into the Reverse transcriptase domain. The Mg(2+) site is built by Asp-719, Asp-794, and Asp-795. The segment at 836–844 (WEWMGYKLH) is RT 'primer grip'. A Tryptophan repeat motif motif is present at residues 1007–1023 (WDMWWQDYWQVSWIPEW). The RNase H type-1 domain occupies 1043–1166 (IKGEDVYYVD…IDKLVSKGIR (124 aa)). Mg(2+) contacts are provided by Asp-1052, Glu-1087, Asp-1107, and Asp-1158. The Integrase-type zinc-finger motif lies at 1172–1213 (DRIEEAQDDHAKYHNNWRSMVQEFGLPNIVAKEIVAACPKCQ). 4 residues coordinate Zn(2+): His-1181, His-1185, Cys-1209, and Cys-1212. An Integrase catalytic domain is found at 1223–1373 (VDASIETWQM…SSAERLVNML (151 aa)). Positions 1233 and 1285 each coordinate Mg(2+). A DNA-binding region (integrase-type) is located at residues 1392 to 1439 (FKVYYREGRDPVWKGPARLIWKGEGAVVIKEGEDIKVVPRRKAKIIKD). The interval 1440-1472 (YGERKTMDSEGSMEGVREANKQMEGDSDLQDQE) is disordered. Basic and acidic residues predominate over residues 1454 to 1463 (GVREANKQME).

In terms of assembly, homotrimer. Interacts with gp41 (via C-terminus). Homodimer. The active site consists of two apposed aspartic acid residues. As to quaternary structure, heterodimer of p66 RT and p51 RT (RT p66/p51). Heterodimerization of RT is essential for DNA polymerase activity. Despite the sequence identities, p66 RT and p51 RT have distinct folding. In terms of assembly, homotetramer; may further associate as a homohexadecamer. Requires Mg(2+) as cofactor. Specific enzymatic cleavages by the viral protease yield mature proteins. The protease is released by autocatalytic cleavage. The polyprotein is cleaved during and after budding, this process is termed maturation. Proteolytic cleavage of p66 RT removes the RNase H domain to yield the p51 RT subunit. In terms of processing, capsid protein p24 is phosphorylated.

It is found in the virion. It localises to the host nucleus. The protein localises to the host cytoplasm. The protein resides in the host cell membrane. It carries out the reaction Specific for a P1 residue that is hydrophobic, and P1' variable, but often Pro.. It catalyses the reaction Endohydrolysis of RNA in RNA/DNA hybrids. Three different cleavage modes: 1. sequence-specific internal cleavage of RNA. Human immunodeficiency virus type 1 and Moloney murine leukemia virus enzymes prefer to cleave the RNA strand one nucleotide away from the RNA-DNA junction. 2. RNA 5'-end directed cleavage 13-19 nucleotides from the RNA end. 3. DNA 3'-end directed cleavage 15-20 nucleotides away from the primer terminus.. The enzyme catalyses 3'-end directed exonucleolytic cleavage of viral RNA-DNA hybrid.. The catalysed reaction is DNA(n) + a 2'-deoxyribonucleoside 5'-triphosphate = DNA(n+1) + diphosphate. With respect to regulation, the viral protease is inhibited by many synthetic protease inhibitors (PIs), such as amprenavir, atazanavir, indinavir, loprinavir, nelfinavir, ritonavir and saquinavir. RT can be inhibited either by nucleoside RT inhibitors (NRTIs) or by non nucleoside RT inhibitors (NNRTIs). NRTIs act as chain terminators, whereas NNRTIs inhibit DNA polymerization by binding a small hydrophobic pocket near the RT active site and inducing an allosteric change in this region. Classical NRTIs are abacavir, adefovir (PMEA), didanosine (ddI), lamivudine (3TC), stavudine (d4T), tenofovir (PMPA), zalcitabine (ddC), and zidovudine (AZT). Classical NNRTIs are atevirdine (BHAP U-87201E), delavirdine, efavirenz (DMP-266), emivirine (I-EBU), and nevirapine (BI-RG-587). The tritherapies used as a basic effective treatment of AIDS associate two NRTIs and one NNRTI. Use of protease inhibitors in tritherapy regimens permit more ambitious therapeutic strategies. Its function is as follows. Gag-Pol polyprotein and Gag polyprotein may regulate their own translation, by the binding genomic RNA in the 5'-UTR. At low concentration, Gag-Pol and Gag would promote translation, whereas at high concentration, the polyproteins encapsidate genomic RNA and then shut off translation. In terms of biological role, matrix protein p17 has two main functions: in infected cell, it targets Gag and Gag-pol polyproteins to the plasma membrane via a multipartite membrane-binding signal, that includes its myristointegration complex. The myristoylation signal and the NLS exert conflicting influences its subcellular localization. The key regulation of these motifs might be phosphorylation of a portion of MA molecules on the C-terminal tyrosine at the time of virus maturation, by virion-associated cellular tyrosine kinase. Implicated in the release from host cell mediated by Vpu. Capsid protein p24 forms the conical core that encapsulates the genomic RNA-nucleocapsid complex in the virion. The core is constituted by capsid protein hexamer subunits. The core is disassembled soon after virion entry. Interaction with host PPIA/CYPA protects the virus from restriction by host TRIM5-alpha and from an unknown antiviral activity in host cells. This capsid restriction by TRIM5 is one of the factors which restricts SIV to the simian species. Functionally, nucleocapsid protein p7 encapsulates and protects viral dimeric unspliced (genomic) RNA. Binds these RNAs through its zinc fingers. Facilitates rearangement of nucleic acid secondary structure during retrotranscription of genomic RNA. This capability is referred to as nucleic acid chaperone activity. Its function is as follows. The aspartyl protease mediates proteolytic cleavages of Gag and Gag-Pol polyproteins during or shortly after the release of the virion from the plasma membrane. Cleavages take place as an ordered, step-wise cascade to yield mature proteins. This process is called maturation. Displays maximal activity during the budding process just prior to particle release from the cell. Also cleaves Nef and Vif, probably concomitantly with viral structural proteins on maturation of virus particles. Hydrolyzes host EIF4GI and PABP1 in order to shut off the capped cellular mRNA translation. The resulting inhibition of cellular protein synthesis serves to ensure maximal viral gene expression and to evade host immune response. In terms of biological role, reverse transcriptase/ribonuclease H (RT) is a multifunctional enzyme that converts the viral dimeric RNA genome into dsDNA in the cytoplasm, shortly after virus entry into the cell. This enzyme displays a DNA polymerase activity that can copy either DNA or RNA templates, and a ribonuclease H (RNase H) activity that cleaves the RNA strand of RNA-DNA heteroduplexes in a partially processive 3' to 5' endonucleasic mode. Conversion of viral genomic RNA into dsDNA requires many steps. A tRNA binds to the primer-binding site (PBS) situated at the 5'-end of the viral RNA. RT uses the 3' end of the tRNA primer to perform a short round of RNA-dependent minus-strand DNA synthesis. The reading proceeds through the U5 region and ends after the repeated (R) region which is present at both ends of viral RNA. The portion of the RNA-DNA heteroduplex is digested by the RNase H, resulting in a ssDNA product attached to the tRNA primer. This ssDNA/tRNA hybridizes with the identical R region situated at the 3' end of viral RNA. This template exchange, known as minus-strand DNA strong stop transfer, can be either intra- or intermolecular. RT uses the 3' end of this newly synthesized short ssDNA to perform the RNA-dependent minus-strand DNA synthesis of the whole template. RNase H digests the RNA template except for two polypurine tracts (PPTs) situated at the 5'-end and near the center of the genome. It is not clear if both polymerase and RNase H activities are simultaneous. RNase H can probably proceed both in a polymerase-dependent (RNA cut into small fragments by the same RT performing DNA synthesis) and a polymerase-independent mode (cleavage of remaining RNA fragments by free RTs). Secondly, RT performs DNA-directed plus-strand DNA synthesis using the PPTs that have not been removed by RNase H as primers. PPTs and tRNA primers are then removed by RNase H. The 3' and 5' ssDNA PBS regions hybridize to form a circular dsDNA intermediate. Strand displacement synthesis by RT to the PBS and PPT ends produces a blunt ended, linear dsDNA copy of the viral genome that includes long terminal repeats (LTRs) at both ends. Integrase catalyzes viral DNA integration into the host chromosome, by performing a series of DNA cutting and joining reactions. This enzyme activity takes place after virion entry into a cell and reverse transcription of the RNA genome in dsDNA. The first step in the integration process is 3' processing. This step requires a complex comprising the viral genome, matrix protein, Vpr and integrase. This complex is called the pre-integration complex (PIC). The integrase protein removes 2 nucleotides from each 3' end of the viral DNA, leaving recessed CA OH's at the 3' ends. In the second step, the PIC enters cell nucleus. This process is mediated through integrase and Vpr proteins, and allows the virus to infect a non dividing cell. This ability to enter the nucleus is specific of lentiviruses, other retroviruses cannot and rely on cell division to access cell chromosomes. In the third step, termed strand transfer, the integrase protein joins the previously processed 3' ends to the 5' ends of strands of target cellular DNA at the site of integration. The 5'-ends are produced by integrase-catalyzed staggered cuts, 5 bp apart. A Y-shaped, gapped, recombination intermediate results, with the 5'-ends of the viral DNA strands and the 3' ends of target DNA strands remaining unjoined, flanking a gap of 5 bp. The last step is viral DNA integration into host chromosome. This involves host DNA repair synthesis in which the 5 bp gaps between the unjoined strands are filled in and then ligated. Since this process occurs at both cuts flanking the SIV genome, a 5 bp duplication of host DNA is produced at the ends of SIV integration. Alternatively, Integrase may catalyze the excision of viral DNA just after strand transfer, this is termed disintegration. The polypeptide is Gag-Pol polyprotein (gag-pol) (Simian immunodeficiency virus agm.grivet (isolate AGM gr-1) (SIV-agm.gri)).